The sequence spans 268 residues: Shikimate dehydrogenase (NADP(+)) (268 aa).

Residues 13–15 and Thr60 contribute to the shikimate site; that span reads SLS. Lys64 serves as the catalytic Proton acceptor. Glu76 is an NADP(+) binding site. Residues Asn85 and Asp100 each contribute to the shikimate site. Residues 124–128, 148–153, and Ile209 contribute to the NADP(+) site; these read GAGGA and NRTMAR. Shikimate is bound at residue Tyr211. Gly232 lines the NADP(+) pocket.

It belongs to the shikimate dehydrogenase family. In terms of assembly, homodimer.

The enzyme catalyses shikimate + NADP(+) = 3-dehydroshikimate + NADPH + H(+). Its pathway is metabolic intermediate biosynthesis; chorismate biosynthesis; chorismate from D-erythrose 4-phosphate and phosphoenolpyruvate: step 4/7. Involved in the biosynthesis of the chorismate, which leads to the biosynthesis of aromatic amino acids. Catalyzes the reversible NADPH linked reduction of 3-dehydroshikimate (DHSA) to yield shikimate (SA). In Staphylococcus aureus (strain MSSA476), this protein is Shikimate dehydrogenase (NADP(+)).